A 176-amino-acid polypeptide reads, in one-letter code: Probable inosine/xanthosine triphosphatase (176 aa).

Aspartate 36 is a binding site for Mg(2+).

The protein belongs to the YjjX NTPase family. As to quaternary structure, homodimer. Mg(2+) serves as cofactor. The cofactor is Mn(2+).

It catalyses the reaction XTP + H2O = XDP + phosphate + H(+). It carries out the reaction ITP + H2O = IDP + phosphate + H(+). Its function is as follows. Phosphatase that hydrolyzes non-canonical purine nucleotides such as XTP and ITP to their respective diphosphate derivatives. Probably excludes non-canonical purines from DNA/RNA precursor pool, thus preventing their incorporation into DNA/RNA and avoiding chromosomal lesions. In Saccharolobus islandicus (strain M.16.4 / Kamchatka #3) (Sulfolobus islandicus), this protein is Probable inosine/xanthosine triphosphatase.